The following is a 349-amino-acid chain: Probable sugar phosphate/phosphate translocator At5g25400 (349 aa).

Transmembrane regions (helical) follow at residues Ile-15–Tyr-35, Phe-49–Ile-69, Val-89–Tyr-109, Ser-113–Phe-133, Glu-141–Ala-161, Val-165–Ile-185, Val-205–Leu-225, Leu-236–Val-256, Thr-263–Ile-283, and Thr-286–Asn-306. One can recognise an EamA domain in the interval Tyr-38–Ala-156. The tract at residues Thr-321–Asp-349 is disordered. Residues Glu-328–Asp-349 show a composition bias toward basic and acidic residues.

It belongs to the TPT transporter family. TPT (TC 2.A.7.9) subfamily.

It is found in the membrane. The protein is Probable sugar phosphate/phosphate translocator At5g25400 of Arabidopsis thaliana (Mouse-ear cress).